The primary structure comprises 365 residues: Chorismate synthase (365 aa).

NADP(+)-binding residues include R48 and R54. FMN is bound by residues 131-133, 243-244, G288, 303-307, and R329; these read RSS, NA, and KPTSS.

This sequence belongs to the chorismate synthase family. In terms of assembly, homotetramer. FMNH2 serves as cofactor.

The enzyme catalyses 5-O-(1-carboxyvinyl)-3-phosphoshikimate = chorismate + phosphate. The protein operates within metabolic intermediate biosynthesis; chorismate biosynthesis; chorismate from D-erythrose 4-phosphate and phosphoenolpyruvate: step 7/7. Its function is as follows. Catalyzes the anti-1,4-elimination of the C-3 phosphate and the C-6 proR hydrogen from 5-enolpyruvylshikimate-3-phosphate (EPSP) to yield chorismate, which is the branch point compound that serves as the starting substrate for the three terminal pathways of aromatic amino acid biosynthesis. This reaction introduces a second double bond into the aromatic ring system. The sequence is that of Chorismate synthase from Sinorhizobium fredii (strain NBRC 101917 / NGR234).